Consider the following 476-residue polypeptide: Aspartyl/glutamyl-tRNA(Asn/Gln) amidotransferase subunit B (476 aa).

The protein belongs to the GatB/GatE family. GatB subfamily. Heterotrimer of A, B and C subunits.

It catalyses the reaction L-glutamyl-tRNA(Gln) + L-glutamine + ATP + H2O = L-glutaminyl-tRNA(Gln) + L-glutamate + ADP + phosphate + H(+). It carries out the reaction L-aspartyl-tRNA(Asn) + L-glutamine + ATP + H2O = L-asparaginyl-tRNA(Asn) + L-glutamate + ADP + phosphate + 2 H(+). In terms of biological role, allows the formation of correctly charged Asn-tRNA(Asn) or Gln-tRNA(Gln) through the transamidation of misacylated Asp-tRNA(Asn) or Glu-tRNA(Gln) in organisms which lack either or both of asparaginyl-tRNA or glutaminyl-tRNA synthetases. The reaction takes place in the presence of glutamine and ATP through an activated phospho-Asp-tRNA(Asn) or phospho-Glu-tRNA(Gln). This Vesicomyosocius okutanii subsp. Calyptogena okutanii (strain HA) protein is Aspartyl/glutamyl-tRNA(Asn/Gln) amidotransferase subunit B.